Reading from the N-terminus, the 116-residue chain is S-adenosylmethionine decarboxylase proenzyme (116 aa).

S63 (schiff-base intermediate with substrate; via pyruvic acid) is an active-site residue. S63 is modified (pyruvic acid (Ser); by autocatalysis). H68 (proton acceptor; for processing activity) is an active-site residue. C83 functions as the Proton donor; for catalytic activity in the catalytic mechanism.

It belongs to the prokaryotic AdoMetDC family. Type 1 subfamily. Heterotetramer of two alpha and two beta chains arranged as a dimer of alpha/beta heterodimers. Requires pyruvate as cofactor. Post-translationally, is synthesized initially as an inactive proenzyme. Formation of the active enzyme involves a self-maturation process in which the active site pyruvoyl group is generated from an internal serine residue via an autocatalytic post-translational modification. Two non-identical subunits are generated from the proenzyme in this reaction, and the pyruvate is formed at the N-terminus of the alpha chain, which is derived from the carboxyl end of the proenzyme. The post-translation cleavage follows an unusual pathway, termed non-hydrolytic serinolysis, in which the side chain hydroxyl group of the serine supplies its oxygen atom to form the C-terminus of the beta chain, while the remainder of the serine residue undergoes an oxidative deamination to produce ammonia and the pyruvoyl group blocking the N-terminus of the alpha chain.

It catalyses the reaction S-adenosyl-L-methionine + H(+) = S-adenosyl 3-(methylsulfanyl)propylamine + CO2. It functions in the pathway amine and polyamine biosynthesis; S-adenosylmethioninamine biosynthesis; S-adenosylmethioninamine from S-adenosyl-L-methionine: step 1/1. Functionally, catalyzes the decarboxylation of S-adenosylmethionine to S-adenosylmethioninamine (dcAdoMet), the propylamine donor required for the synthesis of the polyamines spermine and spermidine from the diamine putrescine. The protein is S-adenosylmethionine decarboxylase proenzyme of Clostridium botulinum (strain Okra / Type B1).